Reading from the N-terminus, the 229-residue chain is Uracil-DNA glycosylase (229 aa).

Residue Asp-64 is the Proton acceptor of the active site.

Belongs to the uracil-DNA glycosylase (UDG) superfamily. UNG family.

The protein localises to the cytoplasm. It catalyses the reaction Hydrolyzes single-stranded DNA or mismatched double-stranded DNA and polynucleotides, releasing free uracil.. Functionally, excises uracil residues from the DNA which can arise as a result of misincorporation of dUMP residues by DNA polymerase or due to deamination of cytosine. This Geobacillus kaustophilus (strain HTA426) protein is Uracil-DNA glycosylase.